The following is a 483-amino-acid chain: Regulatory protein ViaA (483 aa).

This sequence belongs to the ViaA family. In terms of assembly, homodimer. Interacts with RavA.

It localises to the cytoplasm. Its function is as follows. Component of the RavA-ViaA chaperone complex, which may act on the membrane to optimize the function of some of the respiratory chains. ViaA stimulates the ATPase activity of RavA. This Salmonella heidelberg (strain SL476) protein is Regulatory protein ViaA.